The following is a 103-amino-acid chain: Histone H4.1 (103 aa).

Residues 1 to 14 show a composition bias toward gly residues; the sequence is MSGRGKGGKGLGKG. Positions 1–20 are disordered; the sequence is MSGRGKGGKGLGKGGAKRHR. Residue Lys6 is modified to N6-acetyl-N6-methyllysine; alternate. Lys6, Lys9, and Lys13 each carry N6-methyllysine; alternate. Lys13 is subject to N6-acetyl-N6-methyllysine; alternate. The DNA-binding element occupies 17 to 21; sequence KRHRK. The residue at position 92 (Lys92) is an N6-glutaryllysine.

This sequence belongs to the histone H4 family. In terms of assembly, the nucleosome is a histone octamer containing two molecules each of H2A, H2B, H3 and H4 assembled in one H3-H4 heterotetramer and two H2A-H2B heterodimers. The octamer wraps approximately 147 bp of DNA. Glutarylation at Lys-92 (H4K91glu) destabilizes nucleosomes by promoting dissociation of the H2A-H2B dimers from nucleosomes.

It localises to the nucleus. The protein resides in the chromosome. In terms of biological role, core component of nucleosome. Nucleosomes wrap and compact DNA into chromatin, limiting DNA accessibility to the cellular machineries which require DNA as a template. Histones thereby play a central role in transcription regulation, DNA repair, DNA replication and chromosomal stability. DNA accessibility is regulated via a complex set of post-translational modifications of histones, also called histone code, and nucleosome remodeling. This chain is Histone H4.1 (hhfA), found in Emericella nidulans (strain FGSC A4 / ATCC 38163 / CBS 112.46 / NRRL 194 / M139) (Aspergillus nidulans).